Here is a 525-residue protein sequence, read N- to C-terminus: MSTCIQKLFEEQVVRTPDEVAVIFKKETLTYKELNEKSNQLARLLREGGVGPDTVVGIMVERSIEMVVGIFGILKAGGAYLPLSPNHPSSRLQFIIEDSGAKLILTQKQILHRFQDSLKADMLALDSISYEGKGENLECINKPSDLVYVIYTSGSTGKPKGVMIEHSALINRIEWMQEAYPISSKDTILQKTPYTFDVSVWEMFWWAIVGAKVCILAPGMEKFPQAIIETTESNDVTIMHFVPSMLSAFLHYLDVTGETNRIKSLKQVFVSGEALLSQHINRFNKLLNFSNGTLLTNLYGPTEATIDVTAYDCPTHEITEGSVPIGRPIKNIEMFVVDKYGNKLPEGHIGELCISGIGLARGYVNRPQLTAEKFVQYSLDTRIYKTGDLALIRSDGNIEFHGRIDFQVKVNGLRIELGEIESCLMSCEGVLQCAVIVRQESEMVVKLIAFYESENDIELERLKKYLRLFLPDYMIPNSFVRVNEMPLTDSGKIDRKVLALLGSDKYSHHTTLVGGSVNEESSKDS.

This sequence belongs to the ATP-dependent AMP-binding enzyme family.

The enzyme catalyses holo-[peptidyl-carrier protein] + L-serine + ATP = L-seryl-[peptidyl-carrier protein] + AMP + diphosphate. Its pathway is antibiotic biosynthesis. Involved in the biosynthesis of the linear aminopolyol antibiotic zwittermicin A (ZmA). Specifically adenylates L-serine and loads it onto the holo form of ZmaH via a thioester linkage to the phosphopanthetheine moiety. The chain is Zwittermicin A synthase ZmaJ from Bacillus cereus.